The chain runs to 449 residues: Phosphoglucosamine mutase (449 aa).

Catalysis depends on Ser101, which acts as the Phosphoserine intermediate. Residues Ser101, Asp242, Asp244, and Asp246 each contribute to the Mg(2+) site. The residue at position 101 (Ser101) is a Phosphoserine.

This sequence belongs to the phosphohexose mutase family. The cofactor is Mg(2+). Post-translationally, activated by phosphorylation.

It catalyses the reaction alpha-D-glucosamine 1-phosphate = D-glucosamine 6-phosphate. Functionally, catalyzes the conversion of glucosamine-6-phosphate to glucosamine-1-phosphate. The protein is Phosphoglucosamine mutase of Methylocella silvestris (strain DSM 15510 / CIP 108128 / LMG 27833 / NCIMB 13906 / BL2).